We begin with the raw amino-acid sequence, 167 residues long: Signal peptidase complex subunit 3A (167 aa).

Residues Met1–Leu11 are Cytoplasmic-facing. The chain crosses the membrane as a helical; Signal-anchor for type II membrane protein span at residues Leu12–Phe32. At Ser33 to Arg167 the chain is on the lumenal side. An N-linked (GlcNAc...) asparagine glycan is attached at Asn136.

Belongs to the SPCS3 family. As to quaternary structure, component of the signal peptidase complex (SPC) composed of a catalytic subunit SEC11 and three accessory subunits SPCS1, SPCS2 and SPCS3. The complex induces a local thinning of the ER membrane which is used to measure the length of the signal peptide (SP) h-region of protein substrates. This ensures the selectivity of the complex towards h-regions shorter than 18-20 amino acids.

It localises to the endoplasmic reticulum membrane. In terms of biological role, essential component of the signal peptidase complex (SPC) which catalyzes the cleavage of N-terminal signal sequences from nascent proteins as they are translocated into the lumen of the endoplasmic reticulum. Essential for the SPC catalytic activity, possibly by stabilizing and positioning the active center of the complex close to the lumenal surface. This Arabidopsis thaliana (Mouse-ear cress) protein is Signal peptidase complex subunit 3A.